Here is a 159-residue protein sequence, read N- to C-terminus: Ribosomal RNA large subunit methyltransferase H (159 aa).

Residues Leu76, Gly108, and 127–132 (FSKMTF) contribute to the S-adenosyl-L-methionine site.

It belongs to the RNA methyltransferase RlmH family. As to quaternary structure, homodimer.

Its subcellular location is the cytoplasm. The enzyme catalyses pseudouridine(1915) in 23S rRNA + S-adenosyl-L-methionine = N(3)-methylpseudouridine(1915) in 23S rRNA + S-adenosyl-L-homocysteine + H(+). Specifically methylates the pseudouridine at position 1915 (m3Psi1915) in 23S rRNA. This is Ribosomal RNA large subunit methyltransferase H from Clostridium botulinum (strain Langeland / NCTC 10281 / Type F).